The sequence spans 181 residues: Cytochrome b6-f complex iron-sulfur subunit (181 aa).

Positions 1 to 35 are disordered; that stretch reads MAQTGNFKSPARMSSLGQGAAPASSGAVTGGKPRE. Helical transmembrane passes span 53–73 and 114–134; these read VGGV…KYII and GGAL…VNWV. Residues 85–178 form the Rieske domain; the sequence is LTVGKASEVP…ARIEGDSIII (94 aa). [2Fe-2S] cluster-binding residues include C124, H126, C142, and H145. C129 and C144 are oxidised to a cystine.

The protein belongs to the Rieske iron-sulfur protein family. [2Fe-2S] cluster is required as a cofactor.

It localises to the cell inner membrane. The catalysed reaction is 2 oxidized [plastocyanin] + a plastoquinol + 2 H(+)(in) = 2 reduced [plastocyanin] + a plastoquinone + 4 H(+)(out). Component of the green S-bacteria bc-complex which consists of the Rieske protein and cytochrome b subunit and which appears to lack a cytochrome c1-equivalent. This complex has a comparatively low redox potential. This is Cytochrome b6-f complex iron-sulfur subunit (petC) from Chlorobaculum thiosulfatiphilum (Chlorobium limicola f.sp. thiosulfatophilum).